The primary structure comprises 177 residues: Large ribosomal subunit protein uL6 (177 aa).

This sequence belongs to the universal ribosomal protein uL6 family. Part of the 50S ribosomal subunit.

Functionally, this protein binds to the 23S rRNA, and is important in its secondary structure. It is located near the subunit interface in the base of the L7/L12 stalk, and near the tRNA binding site of the peptidyltransferase center. This chain is Large ribosomal subunit protein uL6, found in Neisseria meningitidis serogroup C (strain 053442).